Here is a 477-residue protein sequence, read N- to C-terminus: Methylenetetrahydrofolate--tRNA-(uracil-5-)-methyltransferase TrmFO (477 aa).

14-19 (GGGLAG) contacts FAD.

The protein belongs to the MnmG family. TrmFO subfamily. FAD is required as a cofactor.

The protein localises to the cytoplasm. The catalysed reaction is uridine(54) in tRNA + (6R)-5,10-methylene-5,6,7,8-tetrahydrofolate + NADH + H(+) = 5-methyluridine(54) in tRNA + (6S)-5,6,7,8-tetrahydrofolate + NAD(+). It carries out the reaction uridine(54) in tRNA + (6R)-5,10-methylene-5,6,7,8-tetrahydrofolate + NADPH + H(+) = 5-methyluridine(54) in tRNA + (6S)-5,6,7,8-tetrahydrofolate + NADP(+). Catalyzes the folate-dependent formation of 5-methyl-uridine at position 54 (M-5-U54) in all tRNAs. The chain is Methylenetetrahydrofolate--tRNA-(uracil-5-)-methyltransferase TrmFO from Rhizobium johnstonii (strain DSM 114642 / LMG 32736 / 3841) (Rhizobium leguminosarum bv. viciae).